Here is a 66-residue protein sequence, read N- to C-terminus: Large ribosomal subunit protein bL33B (66 aa).

The protein belongs to the bacterial ribosomal protein bL33 family.

In Synechococcus sp. (strain CC9605), this protein is Large ribosomal subunit protein bL33B.